Consider the following 255-residue polypeptide: Hydroxyacylglutathione hydrolase (255 aa).

Zn(2+) contacts are provided by H55, H57, D59, H60, H113, D132, and H170.

It belongs to the metallo-beta-lactamase superfamily. Glyoxalase II family. As to quaternary structure, monomer. Zn(2+) is required as a cofactor.

It catalyses the reaction an S-(2-hydroxyacyl)glutathione + H2O = a 2-hydroxy carboxylate + glutathione + H(+). It participates in secondary metabolite metabolism; methylglyoxal degradation; (R)-lactate from methylglyoxal: step 2/2. Thiolesterase that catalyzes the hydrolysis of S-D-lactoyl-glutathione to form glutathione and D-lactic acid. This is Hydroxyacylglutathione hydrolase from Methylobacterium nodulans (strain LMG 21967 / CNCM I-2342 / ORS 2060).